A 125-amino-acid chain; its full sequence is Small ribosomal subunit protein uS12c (125 aa).

The tract at residues 1 to 23 is disordered; sequence MPTLEHLTRSPRKKIKRKTKSPA. The span at 9 to 20 shows a compositional bias: basic residues; the sequence is RSPRKKIKRKTK.

It belongs to the universal ribosomal protein uS12 family. In terms of assembly, part of the 30S ribosomal subunit.

It localises to the plastid. The protein localises to the chloroplast. Its function is as follows. With S4 and S5 plays an important role in translational accuracy. Located at the interface of the 30S and 50S subunits. The protein is Small ribosomal subunit protein uS12c (rps12) of Euglena gracilis.